Consider the following 338-residue polypeptide: 1-aminocyclopropane-1-carboxylate deaminase (338 aa).

K51 is modified (N6-(pyridoxal phosphate)lysine). S78 (nucleophile) is an active-site residue.

It belongs to the ACC deaminase/D-cysteine desulfhydrase family. As to quaternary structure, homotrimer. Requires pyridoxal 5'-phosphate as cofactor.

It catalyses the reaction 1-aminocyclopropane-1-carboxylate + H2O = 2-oxobutanoate + NH4(+). Functionally, catalyzes a cyclopropane ring-opening reaction, the irreversible conversion of 1-aminocyclopropane-1-carboxylate (ACC) to ammonia and alpha-ketobutyrate. Allows growth on ACC as a nitrogen source. This Pseudomonas syringae pv. syringae (strain B728a) protein is 1-aminocyclopropane-1-carboxylate deaminase.